Consider the following 197-residue polypeptide: MKKRRSKKERQELLQQTIESNPFITDEDLAEKFQVSIQTVRLDRMELSIPELRERIKHVATKQHEEDVKSLPLEEVVGEIIDIELDRHAISIFEVKIEHVFKRNQIARGHHLFAQANSLAVAVIDEELALTAKSTIRYIRPVKLGERVVAKARVEDVENDKGRTVVKVRSFVGEELVFTGTFEMYRSSNYSEEGNNL.

Belongs to the FapR family.

Transcriptional factor involved in regulation of membrane lipid biosynthesis by repressing genes involved in fatty acid and phospholipid metabolism. This is Transcription factor FapR from Bacillus cereus (strain B4264).